A 147-amino-acid chain; its full sequence is ATP synthase epsilon chain 2 (147 aa).

The protein belongs to the ATPase epsilon chain family. F-type ATPases have 2 components, CF(1) - the catalytic core - and CF(0) - the membrane proton channel. CF(1) has five subunits: alpha(3), beta(3), gamma(1), delta(1), epsilon(1). CF(0) has three main subunits: a, b and c.

It localises to the cell inner membrane. Produces ATP from ADP in the presence of a proton gradient across the membrane. The protein is ATP synthase epsilon chain 2 of Photobacterium profundum (strain SS9).